Consider the following 171-residue polypeptide: Pro-corazonin (171 aa).

Residues 1–20 form the signal peptide; sequence MLHTRTIALLLVGLVVLVNA. Residue Gln-21 is modified to Pyrrolidone carboxylic acid. Asn-31 is modified (asparagine amide). The propeptide occupies 82–171; that stretch reads FLRNPCDLRV…GFSDHRQKIA (90 aa).

This sequence belongs to the corazonin family.

It is found in the secreted. In terms of biological role, cardioactive peptide. Corazonin is probably involved in the physiological regulation of the heart beat. The protein is Pro-corazonin of Anopheles gambiae (African malaria mosquito).